Here is a 678-residue protein sequence, read N- to C-terminus: GAS2-like protein 1 (678 aa).

A2 bears the N-acetylalanine mark. The Calponin-homology (CH) domain occupies 27 to 148 (EAMKEDLADW…CLLEVARRGA (122 aa)). Positions 203–275 (NDLRNLDELV…HYLDKHDPCR (73 aa)) constitute a GAR domain. Residues 276 to 291 (CSSSTHRLPQQRTGTF) show a composition bias toward polar residues. Disordered regions lie at residues 276–524 (CSSS…FRRL) and 538–678 (AASH…DSSM). 2 positions are modified to phosphoserine: S306 and S316. A compositionally biased stretch (basic and acidic residues) spans 327–340 (GTKEGPETPLRPRD). Phosphothreonine is present on T334. A phosphoserine mark is found at S352 and S355. Residues 354-365 (DSDSSASSAQSG) show a composition bias toward low complexity. Basic and acidic residues predominate over residues 370–381 (RSDDSATGSRRE). Residues 392 to 403 (PASPRRPTAPRS) are compositionally biased toward low complexity. S394 carries the phosphoserine modification. Positions 404–413 (QSRDRLDRGR) are enriched in basic and acidic residues. 2 positions are modified to phosphoserine: S436 and S438. Residues 437-454 (QSREEQAVLMVRRDRDGQ) are compositionally biased toward basic and acidic residues. Residues 461–471 (GRGGGGSGGSG) show a composition bias toward gly residues. Phosphoserine occurs at positions 482 and 489. Residues 485–495 (APRPSRGPSPG) are compositionally biased toward pro residues. R490 bears the Omega-N-methylarginine mark. Residue S493 is modified to Phosphoserine. Position 501 is a phosphothreonine (T501). The residue at position 507 (R507) is an Omega-N-methylarginine. 2 stretches are compositionally biased toward low complexity: residues 509 to 519 (PLQLDPQQEQQ) and 554 to 568 (DSAY…SSLS). Residue R630 is modified to Omega-N-methylarginine. The segment covering 631-641 (GRMDTQPDRKP) has biased composition (basic and acidic residues). S654 is modified (phosphoserine). The span at 666 to 678 (HSVTPRTEPDSSM) shows a compositional bias: polar residues.

It belongs to the GAS2 family. In terms of assembly, interacts with MAPRE1.

It is found in the cytoplasm. It localises to the cytoskeleton. The protein resides in the stress fiber. Its function is as follows. Seems to be involved in the cross-linking of microtubules and microfilaments. Regulates microtubule dynamics and stability by interacting with microtubule plus-end tracking proteins, such as MAPRE1, to regulate microtubule growth along actin stress fibers. The sequence is that of GAS2-like protein 1 (Gas2l1) from Mus musculus (Mouse).